The chain runs to 1399 residues: DNA-directed RNA polymerase subunit beta' (1399 aa).

Positions 70, 72, 85, and 88 each coordinate Zn(2+). Residues D460, D462, and D464 each coordinate Mg(2+). C814, C888, C895, and C898 together coordinate Zn(2+).

This sequence belongs to the RNA polymerase beta' chain family. In terms of assembly, the RNAP catalytic core consists of 2 alpha, 1 beta, 1 beta' and 1 omega subunit. When a sigma factor is associated with the core the holoenzyme is formed, which can initiate transcription. Requires Mg(2+) as cofactor. Zn(2+) serves as cofactor.

The catalysed reaction is RNA(n) + a ribonucleoside 5'-triphosphate = RNA(n+1) + diphosphate. Its function is as follows. DNA-dependent RNA polymerase catalyzes the transcription of DNA into RNA using the four ribonucleoside triphosphates as substrates. The polypeptide is DNA-directed RNA polymerase subunit beta' (Pseudomonas savastanoi pv. phaseolicola (strain 1448A / Race 6) (Pseudomonas syringae pv. phaseolicola (strain 1448A / Race 6))).